A 120-amino-acid polypeptide reads, in one-letter code: C-C motif chemokine 23 (120 aa).

A signal peptide spans 1–21 (MKVSVAALSCLMLVTALGSQA). Cystine bridges form between cysteine 54–cysteine 78, cysteine 55–cysteine 94, and cysteine 65–cysteine 105.

Belongs to the intercrine beta (chemokine CC) family.

Its subcellular location is the secreted. Shows chemotactic activity for monocytes, resting T-lymphocytes, and neutrophils, but not for activated lymphocytes. Inhibits proliferation of myeloid progenitor cells in colony formation assays. This protein can bind heparin. Binds CCR1. The protein is C-C motif chemokine 23 (CCL23) of Macaca mulatta (Rhesus macaque).